The chain runs to 77 residues: TFAGLVLLFVVCYASESEEKEFPKEMLSSIFAVDNDFKQEERDCAGYMRECKEKLCCSGYVRSSRWKWCVLPAPWRR.

The signal sequence occupies residues T1–A14. A propeptide spanning residues S15–R42 is cleaved from the precursor. Intrachain disulfides connect C44–C57 and C56–C69.

This sequence belongs to the neurotoxin 10 (Hwtx-1) family. 51 (Hntx-8) subfamily. Hntx-8 sub-subfamily. Expressed by the venom gland.

The protein resides in the secreted. In terms of biological role, ion channel inhibitor. This chain is U3-theraphotoxin-Hhn1k, found in Cyriopagopus hainanus (Chinese bird spider).